Consider the following 71-residue polypeptide: Large ribosomal subunit protein bL31 (71 aa).

Zn(2+)-binding residues include cysteine 16, cysteine 18, cysteine 38, and cysteine 41.

Belongs to the bacterial ribosomal protein bL31 family. Type A subfamily. In terms of assembly, part of the 50S ribosomal subunit. The cofactor is Zn(2+).

In terms of biological role, binds the 23S rRNA. This is Large ribosomal subunit protein bL31 from Laribacter hongkongensis (strain HLHK9).